The following is a 119-amino-acid chain: MDYVSLLNQFWQKQIKSYKETPSQYHYLYPPRFFYKPVLGNLQHPTKWCCTIKFYEYSAQATECTKASAKQDAARLICEQLQAAGLLNGMELRFRSSASDIFGQNRYDASKSYFFSKTA.

The DRBM domain maps to 2–83; sequence DYVSLLNQFW…ARLICEQLQA (82 aa).

In terms of assembly, interacts with host RUNX1 isoform b.

Its subcellular location is the host nucleus. It is found in the host nucleolus. It localises to the host mitochondrion. Its function is as follows. Induces host cell G0/G1 arrest and apoptosis. The chain is Non-structural protein 3b from Tylonycteris pachypus (Lesser bamboo bat).